We begin with the raw amino-acid sequence, 101 residues long: Phosphoribosyl-AMP cyclohydrolase (101 aa).

Asp71 provides a ligand contact to Mg(2+). A Zn(2+)-binding site is contributed by Cys72. The Mg(2+) site is built by Asp73 and Asp75. The Zn(2+) site is built by Cys88 and Cys95.

This sequence belongs to the PRA-CH family. In terms of assembly, homodimer. Mg(2+) serves as cofactor. The cofactor is Zn(2+).

The protein resides in the cytoplasm. It carries out the reaction 1-(5-phospho-beta-D-ribosyl)-5'-AMP + H2O = 1-(5-phospho-beta-D-ribosyl)-5-[(5-phospho-beta-D-ribosylamino)methylideneamino]imidazole-4-carboxamide. The protein operates within amino-acid biosynthesis; L-histidine biosynthesis; L-histidine from 5-phospho-alpha-D-ribose 1-diphosphate: step 3/9. Functionally, catalyzes the hydrolysis of the adenine ring of phosphoribosyl-AMP. This Bacillus cereus (strain B4264) protein is Phosphoribosyl-AMP cyclohydrolase.